Reading from the N-terminus, the 359-residue chain is Outer membrane protein P2 (359 aa).

Residues 1-20 (MKKTLAALIVGAFAASAANA) form the signal peptide.

Belongs to the Gram-negative porin family. Homotrimer.

Its subcellular location is the cell outer membrane. Functionally, forms pores that allow passive diffusion of small molecules across the outer membrane. The polypeptide is Outer membrane protein P2 (ompP2) (Haemophilus influenzae (strain ATCC 51907 / DSM 11121 / KW20 / Rd)).